A 235-amino-acid polypeptide reads, in one-letter code: MLTLIDPNDERQAFPPPDAALKEPNGLLAVGGSLSVARLERAYRRGIFPWYGEGDPILWWSPDPRLVLFPEKLRISRSLRKTLRRRLFRFSFDRAFRAVITACAERREKSEGTWLTADMQSAYLAFHHAGFAHSFEAWQDGALVGGLYGVAMGRIFYGESMFHRVTDASKAALAFAVGCLSHWGYRMIDCQVYSSHLVSLGASTIPRSEFQALVSEYSETSVDPEAWKHAPGDFL.

Belongs to the L/F-transferase family.

The protein resides in the cytoplasm. It carries out the reaction N-terminal L-lysyl-[protein] + L-leucyl-tRNA(Leu) = N-terminal L-leucyl-L-lysyl-[protein] + tRNA(Leu) + H(+). The enzyme catalyses N-terminal L-arginyl-[protein] + L-leucyl-tRNA(Leu) = N-terminal L-leucyl-L-arginyl-[protein] + tRNA(Leu) + H(+). The catalysed reaction is L-phenylalanyl-tRNA(Phe) + an N-terminal L-alpha-aminoacyl-[protein] = an N-terminal L-phenylalanyl-L-alpha-aminoacyl-[protein] + tRNA(Phe). Functionally, functions in the N-end rule pathway of protein degradation where it conjugates Leu, Phe and, less efficiently, Met from aminoacyl-tRNAs to the N-termini of proteins containing an N-terminal arginine or lysine. This is Leucyl/phenylalanyl-tRNA--protein transferase from Methylococcus capsulatus (strain ATCC 33009 / NCIMB 11132 / Bath).